Here is a 663-residue protein sequence, read N- to C-terminus: Transmembrane 9 superfamily member 2 (663 aa).

Positions 1–28 (MSARLPVLSPPRWPRLLLLSLLLLGAVP) are cleaved as a signal peptide. Residues 29–300 (GPRRSGGFYL…LESMPHTHIQ (272 aa)) are Lumenal-facing. Residues 301 to 321 (WFSIMNSLVIVLFLSGMVAMI) traverse the membrane as a helical segment. Over 322–374 (MLRTLHKDIARYNQMDSTEDAQEEFGWKLVHGDIFRPPRKGMLLSVFLGSGTQ) the chain is Cytoplasmic. Residues 375 to 395 (ILIMTFVTLFFACLGFLSPAN) form a helical membrane-spanning segment. The Lumenal portion of the chain corresponds to 396–398 (RGA). The chain crosses the membrane as a helical span at residues 399-419 (LMTCAVVLWVLLGTPAGYVAA). Over 420–437 (RFYKSFGGEKWKTNVLLT) the chain is Cytoplasmic. Residues 438-458 (SFLCPGIVFADFFIMNLILWG) traverse the membrane as a helical segment. Over 459–466 (EGSSAAIP) the chain is Lumenal. A helical membrane pass occupies residues 467–487 (FGTLVAILALWFCISVPLTFI). Over 488–522 (GAYFGFKKNAIEHPVRTNQIPRQIPEQSFYTKPLP) the chain is Cytoplasmic. A helical transmembrane segment spans residues 523-543 (GIIMGGILPFGCIFIQLFFIL). At 544–554 (NSIWSHQMYYM) the chain is on the lumenal side. A helical transmembrane segment spans residues 555 to 575 (FGFLFLVFIILVITCSEATIL). The Cytoplasmic portion of the chain corresponds to 576–591 (LCYFHLCAEDYHWQWR). The chain crosses the membrane as a helical span at residues 592-612 (SFLTSGFTAVYFLIYAVHYFF). Over 613–631 (SKLQITGTASTILYFGYTM) the chain is Lumenal. The helical transmembrane segment at 632–652 (IMVLIFFLFTGTIGFFACFWF) threads the bilayer. The Cytoplasmic portion of the chain corresponds to 653–663 (VTKIYSVVKVD).

Belongs to the nonaspanin (TM9SF) (TC 9.A.2) family.

The protein resides in the endosome membrane. It localises to the golgi outpost. Its subcellular location is the cytoplasm. It is found in the cytoskeleton. The protein localises to the microtubule organizing center. In terms of biological role, in the intracellular compartments, may function as a channel or small molecule transporter. The polypeptide is Transmembrane 9 superfamily member 2 (TM9SF2) (Pongo abelii (Sumatran orangutan)).